The following is a 362-amino-acid chain: Outer mitochondrial transmembrane helix translocase (362 aa).

Over Met1–Glu19 the chain is Mitochondrial intermembrane. Residues Val20–Val42 traverse the membrane as a helical segment. Residues Asp43–Asp362 lie on the Cytoplasmic side of the membrane. Gly137 to Thr144 is a binding site for ATP.

Belongs to the AAA ATPase family. MSP1 subfamily.

Its subcellular location is the mitochondrion outer membrane. The protein localises to the peroxisome membrane. It is found in the postsynaptic cell membrane. It carries out the reaction [protein]-with a C-terminal TM segment(out) + ATP + H2O = [protein]-with a C-terminal TM segment(in) + ADP + phosphate + H(+). In terms of biological role, outer mitochondrial translocase required to remove mislocalized tail-anchored transmembrane proteins on mitochondria. Specifically recognizes and binds tail-anchored transmembrane proteins: acts as a dislocase that mediates the ATP-dependent extraction of mistargeted tail-anchored transmembrane proteins from the mitochondrion outer membrane. Also plays a critical role in regulating the surface expression of AMPA receptors (AMPAR), thereby regulating synaptic plasticity and learning and memory. In Danio rerio (Zebrafish), this protein is Outer mitochondrial transmembrane helix translocase.